Consider the following 339-residue polypeptide: NADH-quinone oxidoreductase subunit H (339 aa).

Transmembrane regions (helical) follow at residues 9-29, 50-70, 82-102, 115-135, 161-181, 187-207, 235-255, 275-295, and 311-331; these read IFPL…LILC, PNVV…KLLF, ILFI…WAVI, VGVL…IIAG, MGLV…SEII, IPWW…ISVL, MGFA…SAMT, IPGF…FLWI, and GWKV…SVLV.

It belongs to the complex I subunit 1 family. As to quaternary structure, NDH-1 is composed of 14 different subunits. Subunits NuoA, H, J, K, L, M, N constitute the membrane sector of the complex.

It is found in the cell inner membrane. The catalysed reaction is a quinone + NADH + 5 H(+)(in) = a quinol + NAD(+) + 4 H(+)(out). Functionally, NDH-1 shuttles electrons from NADH, via FMN and iron-sulfur (Fe-S) centers, to quinones in the respiratory chain. The immediate electron acceptor for the enzyme in this species is believed to be ubiquinone. Couples the redox reaction to proton translocation (for every two electrons transferred, four hydrogen ions are translocated across the cytoplasmic membrane), and thus conserves the redox energy in a proton gradient. This subunit may bind ubiquinone. In Rickettsia rickettsii (strain Iowa), this protein is NADH-quinone oxidoreductase subunit H.